The sequence spans 305 residues: Homoserine O-acetyltransferase (305 aa).

The Acyl-thioester intermediate role is filled by Cys-142. Substrate-binding residues include Lys-163 and Ser-192. The active-site Proton acceptor is the His-235. The active site involves Glu-237. Residue Arg-249 participates in substrate binding.

The protein belongs to the MetA family.

Its subcellular location is the cytoplasm. It carries out the reaction L-homoserine + acetyl-CoA = O-acetyl-L-homoserine + CoA. The protein operates within amino-acid biosynthesis; L-methionine biosynthesis via de novo pathway; O-acetyl-L-homoserine from L-homoserine: step 1/1. Transfers an acetyl group from acetyl-CoA to L-homoserine, forming acetyl-L-homoserine. The chain is Homoserine O-acetyltransferase from Acetivibrio thermocellus (strain ATCC 27405 / DSM 1237 / JCM 9322 / NBRC 103400 / NCIMB 10682 / NRRL B-4536 / VPI 7372) (Clostridium thermocellum).